We begin with the raw amino-acid sequence, 306 residues long: MENRLNYYKIERDEWSNFYQEHIVPLTEEELLNLKSLNDQISLKDVQDIYMPLVHLLRIHLDSHQELQDSQSEFLGVKAQKVPFILGIAGSVAVGKSTTARLLQSLLSEVYPDKKVQLITTDGFLYPNQELKRRNLMERKGFPESYDMRRLLRFVNDVKNNLPAKAPVYSHKVYDIVKGQYEIVESPDILIVEGINVLQLPTNQQIYVSDFFDFSIYVDAEESLIEEWYLERFETLLDTAFKDPTNYYYPYAIGDRKQAIKMAKNIWKTINLKNLREFILPTRNRADLIMHKTNNHVVNELFLRKY.

90–97 (GSVAVGKS) lines the ATP pocket.

It belongs to the prokaryotic pantothenate kinase family.

The protein resides in the cytoplasm. The enzyme catalyses (R)-pantothenate + ATP = (R)-4'-phosphopantothenate + ADP + H(+). The protein operates within cofactor biosynthesis; coenzyme A biosynthesis; CoA from (R)-pantothenate: step 1/5. This Ligilactobacillus salivarius (strain UCC118) (Lactobacillus salivarius) protein is Pantothenate kinase.